A 370-amino-acid chain; its full sequence is 3-dehydroquinate synthase (370 aa).

Residues 112–116 (GVVGD), 136–137 (TS), K149, K158, and 176–179 (TLRT) contribute to the NAD(+) site. Zn(2+)-binding residues include E191, H254, and H276.

It belongs to the sugar phosphate cyclases superfamily. Dehydroquinate synthase family. NAD(+) is required as a cofactor. Co(2+) serves as cofactor. Requires Zn(2+) as cofactor.

Its subcellular location is the cytoplasm. The catalysed reaction is 7-phospho-2-dehydro-3-deoxy-D-arabino-heptonate = 3-dehydroquinate + phosphate. The protein operates within metabolic intermediate biosynthesis; chorismate biosynthesis; chorismate from D-erythrose 4-phosphate and phosphoenolpyruvate: step 2/7. Its function is as follows. Catalyzes the conversion of 3-deoxy-D-arabino-heptulosonate 7-phosphate (DAHP) to dehydroquinate (DHQ). In Xanthomonas axonopodis pv. citri (strain 306), this protein is 3-dehydroquinate synthase.